The sequence spans 152 residues: UPF0178 protein KPK_4355 (152 aa).

It belongs to the UPF0178 family.

The protein is UPF0178 protein KPK_4355 of Klebsiella pneumoniae (strain 342).